The sequence spans 361 residues: MAGKSPEEEHPVKTYGLAAHDSSGVLSPFKFSRRATLEDDVRFKVLYCGICHTDLHFAKNEWGISTYPLVPGHEIVGEVTEVGGKVTKVKVGDKVGVGCLVGPCRTCDNCRADLDNYCPKMVLTYASPNVDGTITYGGYSNEMVCNEHFIVRFPENLPLDGGAPLLCAGITVYSPMKYYGFAKPGSHIAVNGLGGLGHVAVKFAKAMGAKVTVISTSEGKKDDALNRLGADAFLLSSNPEALQAATGTFDGILNTISAKHAIIPLLGLLKSHGKLVLLGAPPEPLDLHSAPLLMGRKMVAGSSIGGLKETQEMLDFAGKHNITADIELISADNINTALERLAKGDVRYRFVLDVAKTLKAP.

Zn(2+)-binding residues include Cys51, Thr53, His73, Cys104, Cys107, Cys110, Cys118, and Cys167. Residues Thr53 and His73 each contribute to the an alcohol site. Thr53 lines the NAD(+) pocket. Residues 192–197, Lys221, 278–280, and Lys356 each bind NAD(+); these read GLGGLG and LGA.

This sequence belongs to the zinc-containing alcohol dehydrogenase family. Class-III subfamily. Homodimer. Requires Zn(2+) as cofactor.

The polypeptide is Alcohol dehydrogenase 9 (Catharanthus roseus (Madagascar periwinkle)).